Reading from the N-terminus, the 171-residue chain is Secretion monitor (171 aa).

Positions 1–30 are cleaved as a signal peptide; sequence MIGILNRWRQFGRRYFWPHLLLGMVAASLG.

The protein belongs to the SecM family.

The protein localises to the cytoplasm. It is found in the cytosol. It localises to the periplasm. Functionally, regulates secA expression by translational coupling of the secM secA operon. Translational pausing at a specific Pro residue 5 residues before the end of the protein may allow disruption of a mRNA repressor helix that normally suppresses secA translation initiation. This Pectobacterium atrosepticum (strain SCRI 1043 / ATCC BAA-672) (Erwinia carotovora subsp. atroseptica) protein is Secretion monitor.